We begin with the raw amino-acid sequence, 138 residues long: Large ribosomal subunit protein uL16 (138 aa).

Over residues 1-13 the composition is skewed to basic residues; sequence MLQPARRKYRKEQ. A disordered region spans residues 1–22; sequence MLQPARRKYRKEQKGRNTGVAT.

The protein belongs to the universal ribosomal protein uL16 family. Part of the 50S ribosomal subunit.

In terms of biological role, binds 23S rRNA and is also seen to make contacts with the A and possibly P site tRNAs. The polypeptide is Large ribosomal subunit protein uL16 (Polaromonas sp. (strain JS666 / ATCC BAA-500)).